The following is a 309-amino-acid chain: Porphobilinogen deaminase (309 aa).

Cysteine 241 is modified (S-(dipyrrolylmethanemethyl)cysteine).

This sequence belongs to the HMBS family. As to quaternary structure, monomer. It depends on dipyrromethane as a cofactor.

It carries out the reaction 4 porphobilinogen + H2O = hydroxymethylbilane + 4 NH4(+). It functions in the pathway porphyrin-containing compound metabolism; protoporphyrin-IX biosynthesis; coproporphyrinogen-III from 5-aminolevulinate: step 2/4. Functionally, tetrapolymerization of the monopyrrole PBG into the hydroxymethylbilane pre-uroporphyrinogen in several discrete steps. In Bacillus cereus (strain B4264), this protein is Porphobilinogen deaminase.